The chain runs to 315 residues: uncharacterized protein (315 aa).

Belongs to the asfivirus C315R family.

This is an uncharacterized protein from Ornithodoros (relapsing fever ticks).